The chain runs to 465 residues: Spermidine/putrescine import ATP-binding protein PotA (465 aa).

A compositionally biased stretch (polar residues) spans Met-1 to Arg-18. Residues Met-1 to Asp-21 are disordered. An ABC transporter domain is found at Ile-30 to Ile-264. Gly-66–Ser-73 serves as a coordination point for ATP.

It belongs to the ABC transporter superfamily. Spermidine/putrescine importer (TC 3.A.1.11.1) family. In terms of assembly, the complex is composed of two ATP-binding proteins (PotA), two transmembrane proteins (PotB and PotC) and a solute-binding protein (PotD).

It is found in the cell membrane. It catalyses the reaction ATP + H2O + polyamine-[polyamine-binding protein]Side 1 = ADP + phosphate + polyamineSide 2 + [polyamine-binding protein]Side 1.. Functionally, part of the ABC transporter complex PotABCD involved in spermidine/putrescine import. Responsible for energy coupling to the transport system. This Frankia alni (strain DSM 45986 / CECT 9034 / ACN14a) protein is Spermidine/putrescine import ATP-binding protein PotA.